The primary structure comprises 158 residues: Ribonuclease H (158 aa).

The RNase H type-1 domain occupies 9 to 155 (AFKPVELYTD…CDKLAVAAYQ (147 aa)). The Mg(2+) site is built by Asp18, Glu58, Asp80, and Asp147.

It belongs to the RNase H family. As to quaternary structure, monomer. Mg(2+) is required as a cofactor.

It localises to the cytoplasm. The enzyme catalyses Endonucleolytic cleavage to 5'-phosphomonoester.. In terms of biological role, endonuclease that specifically degrades the RNA of RNA-DNA hybrids. The chain is Ribonuclease H from Rhodopirellula baltica (strain DSM 10527 / NCIMB 13988 / SH1).